A 309-amino-acid chain; its full sequence is Branched-chain-amino-acid aminotransferase (309 aa).

K160 carries the post-translational modification N6-(pyridoxal phosphate)lysine.

This sequence belongs to the class-IV pyridoxal-phosphate-dependent aminotransferase family. In terms of assembly, homohexamer. Pyridoxal 5'-phosphate serves as cofactor.

It catalyses the reaction L-leucine + 2-oxoglutarate = 4-methyl-2-oxopentanoate + L-glutamate. The catalysed reaction is L-isoleucine + 2-oxoglutarate = (S)-3-methyl-2-oxopentanoate + L-glutamate. The enzyme catalyses L-valine + 2-oxoglutarate = 3-methyl-2-oxobutanoate + L-glutamate. The protein operates within amino-acid biosynthesis; L-isoleucine biosynthesis; L-isoleucine from 2-oxobutanoate: step 4/4. It functions in the pathway amino-acid biosynthesis; L-leucine biosynthesis; L-leucine from 3-methyl-2-oxobutanoate: step 4/4. It participates in amino-acid biosynthesis; L-valine biosynthesis; L-valine from pyruvate: step 4/4. Functionally, acts on leucine, isoleucine and valine. This chain is Branched-chain-amino-acid aminotransferase (ilvE), found in Escherichia coli O157:H7.